The chain runs to 208 residues: ATP-dependent Clp protease proteolytic subunit (208 aa).

Serine 107 functions as the Nucleophile in the catalytic mechanism. Histidine 132 is a catalytic residue.

Belongs to the peptidase S14 family. Fourteen ClpP subunits assemble into 2 heptameric rings which stack back to back to give a disk-like structure with a central cavity, resembling the structure of eukaryotic proteasomes.

The protein resides in the cytoplasm. The catalysed reaction is Hydrolysis of proteins to small peptides in the presence of ATP and magnesium. alpha-casein is the usual test substrate. In the absence of ATP, only oligopeptides shorter than five residues are hydrolyzed (such as succinyl-Leu-Tyr-|-NHMec, and Leu-Tyr-Leu-|-Tyr-Trp, in which cleavage of the -Tyr-|-Leu- and -Tyr-|-Trp bonds also occurs).. Its function is as follows. Cleaves peptides in various proteins in a process that requires ATP hydrolysis. Has a chymotrypsin-like activity. Plays a major role in the degradation of misfolded proteins. The polypeptide is ATP-dependent Clp protease proteolytic subunit (Methylorubrum populi (strain ATCC BAA-705 / NCIMB 13946 / BJ001) (Methylobacterium populi)).